The primary structure comprises 502 residues: ATP synthase subunit alpha (502 aa).

169–176 (GDRQTGKT) provides a ligand contact to ATP.

The protein belongs to the ATPase alpha/beta chains family. In terms of assembly, F-type ATPases have 2 components, CF(1) - the catalytic core - and CF(0) - the membrane proton channel. CF(1) has five subunits: alpha(3), beta(3), gamma(1), delta(1), epsilon(1). CF(0) has three main subunits: a(1), b(2) and c(9-12). The alpha and beta chains form an alternating ring which encloses part of the gamma chain. CF(1) is attached to CF(0) by a central stalk formed by the gamma and epsilon chains, while a peripheral stalk is formed by the delta and b chains.

The protein localises to the cell membrane. The enzyme catalyses ATP + H2O + 4 H(+)(in) = ADP + phosphate + 5 H(+)(out). Functionally, produces ATP from ADP in the presence of a proton gradient across the membrane. The alpha chain is a regulatory subunit. This Streptococcus pyogenes serotype M18 (strain MGAS8232) protein is ATP synthase subunit alpha.